The following is a 183-amino-acid chain: Ubiquitin-conjugating enzyme E2-21 kDa (183 aa).

In terms of domain architecture, UBC core spans 17–179 (TCMSRIVKEY…VKYFLAERER (163 aa)). The Glycyl thioester intermediate role is filled by Cys115.

It belongs to the ubiquitin-conjugating enzyme family.

Its subcellular location is the peroxisome. It carries out the reaction S-ubiquitinyl-[E1 ubiquitin-activating enzyme]-L-cysteine + [E2 ubiquitin-conjugating enzyme]-L-cysteine = [E1 ubiquitin-activating enzyme]-L-cysteine + S-ubiquitinyl-[E2 ubiquitin-conjugating enzyme]-L-cysteine.. The protein operates within protein modification; protein ubiquitination. Catalyzes the covalent attachment of ubiquitin to other proteins. Essential for peroxisome biogenesis. Required for UBC4-independent ubiquitination of PEX5. The sequence is that of Ubiquitin-conjugating enzyme E2-21 kDa (PEX4) from Saccharomyces cerevisiae (strain ATCC 204508 / S288c) (Baker's yeast).